We begin with the raw amino-acid sequence, 274 residues long: Protein STAY-GREEN, chloroplastic (274 aa).

A chloroplast-targeting transit peptide spans 1–48 (MAAATSTMSLLPPITQQQRWHAADSLVVLASRCHNSRRRRRCRYVVPR).

Belongs to the staygreen family. In terms of assembly, interacts with LHCII complex. In terms of tissue distribution, expressed in leaves, roots and developing seeds.

The protein resides in the plastid. It localises to the chloroplast membrane. The protein localises to the chloroplast stroma. Functionally, involved in the disassembling mechanism of the intact light-harvesting complex of photosystem II (LHCII) in the thylakoid membranes. Required to trigger chlorophyll degradation during natural and dark-induced leaf senescence. The chain is Protein STAY-GREEN, chloroplastic (SGR) from Oryza sativa subsp. japonica (Rice).